Here is a 346-residue protein sequence, read N- to C-terminus: GTSQADVALLVVPADQGGFEGAFSKEGQTREHALLAFTLGVKQMIVGINKMDATTPDKYSETRFNEIQAEVSRYLKTVGYNPEKVPFVPISGFMGDNMVERSSNMPWYKGKILVEALDNVEPPKRPSDKPLRLPLQDVYKIGGIGTVPVGRVETGILKPGMVVCFAPTGLQTEVKSVEMHHTQLEQAVPGDNVGFNVKNVSVKDVKRGHVASDSKNDPAKAAASFQAQVIVLHHPGQINPGYSPVVDCHTAHIACKFAVLEKRLDRRSGKALEDDPKFIKTGDAAIIKMEPSKPMCVESFIEYPPLGRFAVRDMKQTVAVGVIKGVEKKEAGGKVTKSAQKATGKK.

The tr-type G domain occupies 1 to 127 (GTSQADVALL…DNVEPPKRPS (127 aa)). 49 to 52 (NKMD) contacts GTP.

Belongs to the TRAFAC class translation factor GTPase superfamily. Classic translation factor GTPase family. EF-Tu/EF-1A subfamily.

The protein resides in the cytoplasm. In terms of biological role, this protein promotes the GTP-dependent binding of aminoacyl-tRNA to the A-site of ribosomes during protein biosynthesis. This is Elongation factor 1-alpha from Eimeria bovis.